The primary structure comprises 82 residues: Three-finger toxin MALT0063C (82 aa).

Positions 1-21 (MRTLLLTLVVVTIVCLDLGNS) are cleaved as a signal peptide. Cystine bridges form between Cys-24–Cys-42, Cys-35–Cys-60, Cys-64–Cys-72, and Cys-73–Cys-78.

It belongs to the three-finger toxin family. Short-chain subfamily. As to expression, expressed by the venom gland.

The protein localises to the secreted. In Micrurus altirostris (Uruguayan coral snake), this protein is Three-finger toxin MALT0063C.